Consider the following 287-residue polypeptide: Inorganic pyrophosphatase (287 aa).

At Thr65 the chain carries Phosphothreonine. Arg79 contributes to the diphosphate binding site. Tyr90 (proton donor) is an active-site residue. Positions 116, 121, and 153 each coordinate Mg(2+). Lys239 participates in a covalent cross-link: Glycyl lysine isopeptide (Lys-Gly) (interchain with G-Cter in ubiquitin). Phosphothreonine is present on Thr251. Phosphoserine is present on Ser266. Lys279 participates in a covalent cross-link: Glycyl lysine isopeptide (Lys-Gly) (interchain with G-Cter in ubiquitin). Ser286 is subject to Phosphoserine.

It belongs to the PPase family. In terms of assembly, homodimer. It depends on Mg(2+) as a cofactor.

Its subcellular location is the cytoplasm. It carries out the reaction diphosphate + H2O = 2 phosphate + H(+). In Saccharomyces cerevisiae (strain ATCC 204508 / S288c) (Baker's yeast), this protein is Inorganic pyrophosphatase (IPP1).